A 124-amino-acid chain; its full sequence is Small ribosomal subunit protein uS12 (124 aa).

Asp-89 carries the post-translational modification 3-methylthioaspartic acid.

This sequence belongs to the universal ribosomal protein uS12 family. In terms of assembly, part of the 30S ribosomal subunit. Contacts proteins S8 and S17. May interact with IF1 in the 30S initiation complex.

Its function is as follows. With S4 and S5 plays an important role in translational accuracy. Interacts with and stabilizes bases of the 16S rRNA that are involved in tRNA selection in the A site and with the mRNA backbone. Located at the interface of the 30S and 50S subunits, it traverses the body of the 30S subunit contacting proteins on the other side and probably holding the rRNA structure together. The combined cluster of proteins S8, S12 and S17 appears to hold together the shoulder and platform of the 30S subunit. In Hamiltonella defensa subsp. Acyrthosiphon pisum (strain 5AT), this protein is Small ribosomal subunit protein uS12.